A 354-amino-acid polypeptide reads, in one-letter code: Chorismate synthase (354 aa).

R48 is a binding site for NADP(+). Residues 126-128, A278, 293-297, and R319 each bind FMN; these read RAS and KPIPS.

The protein belongs to the chorismate synthase family. Homotetramer. FMNH2 is required as a cofactor.

The catalysed reaction is 5-O-(1-carboxyvinyl)-3-phosphoshikimate = chorismate + phosphate. Its pathway is metabolic intermediate biosynthesis; chorismate biosynthesis; chorismate from D-erythrose 4-phosphate and phosphoenolpyruvate: step 7/7. Catalyzes the anti-1,4-elimination of the C-3 phosphate and the C-6 proR hydrogen from 5-enolpyruvylshikimate-3-phosphate (EPSP) to yield chorismate, which is the branch point compound that serves as the starting substrate for the three terminal pathways of aromatic amino acid biosynthesis. This reaction introduces a second double bond into the aromatic ring system. The protein is Chorismate synthase of Desulfosudis oleivorans (strain DSM 6200 / JCM 39069 / Hxd3) (Desulfococcus oleovorans).